We begin with the raw amino-acid sequence, 6199 residues long: Adhesion G-protein coupled receptor V1 (6199 aa).

A signal peptide spans 1–23 (MPAVLALSGLLLMLLTVSVRSES). Calx-beta domains lie at 24 to 109 (AELR…VFIL), 126 to 230 (ATIT…VQLT), 249 to 355 (ISRN…QVVL), 380 to 480 (DKPY…LKLI), 637 to 737 (PDIA…ILTL), 753 to 853 (SREI…VVLS), 869 to 972 (NITV…ITLL), 997 to 1083 (IYFA…YIVL), 1099 to 1199 (TVVI…LRLM), 1434 to 1534 (PIPG…FYLQ), 1563 to 1655 (GLFS…RVRL), 1835 to 1937 (IIVT…VRLT), 1963 to 2063 (LFVF…FLEL), 2092 to 2190 (QVII…RIEL), 2208 to 2308 (ITIL…KVEL), 2425 to 2525 (AAFC…FIIK), 2582 to 2659 (VREE…QIGL), 2673 to 2773 (DTVT…RVIL), 2814 to 2908 (PSSL…LVNI), 2931 to 3029 (EIII…QLIL), and 3054 to 3154 (GHGI…TVTL). Residues 24–5803 (AELRFQGQTQ…IESLASFNEA (5780 aa)) lie on the Extracellular side of the membrane. EAR repeat units lie at residues 3239-3284 (VLAV…KWQG), 3285-3333 (VFVP…RVQA), 3336-3372 (NLTLEQTFSVSGFSVKHFSTDLKQYLIASSEIFVWNR), 3374-3420 (SFFL…QWTD), 3422-3467 (RFQN…LWGS), and 3471-3513 (VFQQ…SWRS). 13 Calx-beta domains span residues 3562 to 3605 (SNQS…RVSL), 3619 to 3719 (QVTF…TIVL), 3778 to 3854 (ITLS…FVNI), 3916 to 3985 (VLRL…MVKL), 4000 to 4103 (VVVS…IQLL), 4120 to 4220 (VVIR…QLRL), 4247 to 4335 (HGLF…FLNI), 4371 to 4471 (VIIQ…LQLT), 4493 to 4593 (DSPN…IIML), 4615 to 4715 (KFGD…TLRL), 4993 to 5076 (QHLV…VNLT), 5125 to 5225 (SEDS…IYLS), and 5260 to 5360 (VGFS…LVEV). Positions 5636–5801 (PYFTIAAHHW…AEIESLASFN (166 aa)) constitute a GAIN-B domain. Cystine bridges form between C5751–C5780 and C5768–C5782. A GPS region spans residues 5751–5801 (CLLWNQAAESWLSDGQFCRLVDDTQNYVECACSHLSIYTAYAEIESLASFN). Residues 5804–5824 (FYAAGFICISGFALAMVSHLM) traverse the membrane as a helical segment. Residues 5825 to 5834 (CARFLMFAAK) are Cytoplasmic-facing. A helical membrane pass occupies residues 5835 to 5855 (LLTHMMVACLGTQICFLVSAF). At 5856–5864 (RGRMFSEDS) the chain is on the extracellular side. Residues 5865–5885 (CAALGLFFHYFHLSQFGWMLV) form a helical membrane-spanning segment. The Cytoplasmic segment spans residues 5886–5908 (QAINFWQILVMNDEHTERRYLLY). The helical transmembrane segment at 5909–5929 (FLLSWGLPALVIIVLVVVLLG) threads the bilayer. At 5930–5954 (GFGWSIHSVYGLVQGDLCFIPNVYA) the chain is on the extracellular side. The helical transmembrane segment at 5955–5975 (ALCTAALVPLICLVGVLVIFI) threads the bilayer. Residues 5976 to 6001 (HAYQVTQQWKAYDDIYRGRTNSSEVP) are Cytoplasmic-facing. The helical transmembrane segment at 6002–6022 (MMLYLFALVTLVCVWAGLHMA) threads the bilayer. The Extracellular portion of the chain corresponds to 6023-6025 (YRY). A helical membrane pass occupies residues 6026-6046 (IWMLILLVIFNIFLGLYVFSV). Residues 6047-6199 (YFVMHNQLFW…RRIPIADTHL (153 aa)) are Cytoplasmic-facing.

Belongs to the G-protein coupled receptor 2 family. Adhesion G-protein coupled receptor (ADGR) subfamily. As to quaternary structure, heterodimer of 2 chains generated by proteolytic processing; the large extracellular N-terminal fragment and the membrane-bound C-terminal fragment predominantly remain associated and non-covalently linked. In terms of processing, autoproteolytically processed at the GPS region of the GAIN-B domain; this cleavage modulates receptor activity.

The protein resides in the cell membrane. Its subcellular location is the cell projection. The protein localises to the stereocilium membrane. It is found in the photoreceptor inner segment. Its function is as follows. Receptor that may have an important role in the development of the sensory nervous system. The sequence is that of Adhesion G-protein coupled receptor V1 (adgrv1) from Danio rerio (Zebrafish).